The primary structure comprises 302 residues: tRNA dimethylallyltransferase (302 aa).

G12–S19 lines the ATP pocket. T14–S19 lines the substrate pocket. Positions D37–Q40 are interaction with substrate tRNA.

It belongs to the IPP transferase family. Monomer. It depends on Mg(2+) as a cofactor.

It catalyses the reaction adenosine(37) in tRNA + dimethylallyl diphosphate = N(6)-dimethylallyladenosine(37) in tRNA + diphosphate. Catalyzes the transfer of a dimethylallyl group onto the adenine at position 37 in tRNAs that read codons beginning with uridine, leading to the formation of N6-(dimethylallyl)adenosine (i(6)A). The chain is tRNA dimethylallyltransferase from Corynebacterium diphtheriae (strain ATCC 700971 / NCTC 13129 / Biotype gravis).